A 367-amino-acid polypeptide reads, in one-letter code: Homoserine O-acetyltransferase (367 aa).

The region spanning 41–339 (NLIVLEHALT…PVGHDAFLTE (299 aa)) is the AB hydrolase-1 domain. The active-site Nucleophile is S136. A substrate-binding site is contributed by R205. Catalysis depends on residues D303 and H333. D334 serves as a coordination point for substrate.

This sequence belongs to the AB hydrolase superfamily. MetX family. Homodimer.

The protein resides in the cytoplasm. The enzyme catalyses L-homoserine + acetyl-CoA = O-acetyl-L-homoserine + CoA. It functions in the pathway amino-acid biosynthesis; L-methionine biosynthesis via de novo pathway; O-acetyl-L-homoserine from L-homoserine: step 1/1. Transfers an acetyl group from acetyl-CoA to L-homoserine, forming acetyl-L-homoserine. This chain is Homoserine O-acetyltransferase, found in Corynebacterium diphtheriae (strain ATCC 700971 / NCTC 13129 / Biotype gravis).